A 264-amino-acid chain; its full sequence is Methionine aminopeptidase (264 aa).

Histidine 79 provides a ligand contact to substrate. Residues aspartate 97, aspartate 108, and histidine 171 each coordinate a divalent metal cation. Histidine 178 provides a ligand contact to substrate. Residues glutamate 204 and glutamate 235 each contribute to the a divalent metal cation site.

The protein belongs to the peptidase M24A family. Methionine aminopeptidase type 1 subfamily. As to quaternary structure, monomer. It depends on Co(2+) as a cofactor. Requires Zn(2+) as cofactor. Mn(2+) serves as cofactor. The cofactor is Fe(2+).

The enzyme catalyses Release of N-terminal amino acids, preferentially methionine, from peptides and arylamides.. Functionally, removes the N-terminal methionine from nascent proteins. The N-terminal methionine is often cleaved when the second residue in the primary sequence is small and uncharged (Met-Ala-, Cys, Gly, Pro, Ser, Thr, or Val). Requires deformylation of the N(alpha)-formylated initiator methionine before it can be hydrolyzed. This Escherichia coli O157:H7 protein is Methionine aminopeptidase.